We begin with the raw amino-acid sequence, 969 residues long: Putative zinc protease mug138 (969 aa).

Position 68 (His-68) interacts with Zn(2+). Glu-71 acts as the Proton acceptor in catalysis. Zn(2+) is bound by residues His-72 and Glu-149.

The protein belongs to the peptidase M16 family.

The protein resides in the cytoplasm. Its function is as follows. Has a role in meiosis. The protein is Putative zinc protease mug138 (mug138) of Schizosaccharomyces pombe (strain 972 / ATCC 24843) (Fission yeast).